Here is a 250-residue protein sequence, read N- to C-terminus: Prophage antitermination protein Q homolog QuuQ (250 aa).

This sequence belongs to the phage antitermination Q type 2 family.

Its function is as follows. Positively regulate expression of some phage genes. Bacterial host RNA polymerase modified by antitermination proteins transcribes through termination sites that otherwise prevent expression of the regulated genes. The chain is Prophage antitermination protein Q homolog QuuQ (quuQ) from Escherichia coli (strain K12).